A 1168-amino-acid polypeptide reads, in one-letter code: DNA-directed RNA polymerase subunit beta (1168 aa).

This sequence belongs to the RNA polymerase beta chain family. In terms of assembly, the RNAP catalytic core consists of 2 alpha, 1 beta, 1 beta' and 1 omega subunit. When a sigma factor is associated with the core the holoenzyme is formed, which can initiate transcription.

The enzyme catalyses RNA(n) + a ribonucleoside 5'-triphosphate = RNA(n+1) + diphosphate. In terms of biological role, DNA-dependent RNA polymerase catalyzes the transcription of DNA into RNA using the four ribonucleoside triphosphates as substrates. The chain is DNA-directed RNA polymerase subunit beta from Rhodococcus opacus (strain B4).